A 77-amino-acid chain; its full sequence is uncharacterized protein (77 aa).

A disordered region spans residues 54 to 77 (HHGRKHKEDMEARHEQLTKGGTIL). Residues 59–70 (HKEDMEARHEQL) show a composition bias toward basic and acidic residues.

This is an uncharacterized protein from Escherichia coli O157:H7.